Here is an 895-residue protein sequence, read N- to C-terminus: Cellulose 1,4-beta-cellobiosidase (895 aa).

The signal sequence occupies residues 1-27 (MNFRRMLCAAIVLTIVLSIMLPSTVFA). Residues 40–199 (NDLLYERTFD…YLDDVSLYDP (160 aa)) enclose the CBM-cenC domain. The segment at 199 to 240 (PRFVKPVEYVLPQPDVRVNQVGYLPFAKKYATVVSSSTSPLK) is linker. Residues 241 to 815 (WQLLNSANQV…WVTAYLDEID (575 aa)) form a catalytic region. Residue Asp386 is the Nucleophile of the active site. Active-site residues include His737, Asp786, and Glu795. The 67-residue stretch at 828-894 (PEVIYGDCNG…ILKEIDVLPH (67 aa)) folds into the Dockerin domain.

Belongs to the glycosyl hydrolase 9 (cellulase E) family.

The protein localises to the secreted. It carries out the reaction Hydrolysis of (1-&gt;4)-beta-D-glucosidic linkages in cellulose and cellotetraose, releasing cellobiose from the non-reducing ends of the chains.. Its activity is regulated as follows. Inhibited by cellobiose. The chain is Cellulose 1,4-beta-cellobiosidase (celK) from Acetivibrio thermocellus (Hungateiclostridium thermocellum).